Reading from the N-terminus, the 355-residue chain is MSVNYAAGLSPYADKGKCGLPEIFDPPEELERKVWELARLVRQSSNVVFHTGAGISTASGIPDFRGPHGVWTMEERGLAPKFDTTFENARPTQTHMALVQLERVGLLHFVVSQNVDGLHVRSGFPRDKLAELHGNMFVEECAKCKTQYVRDTVVGTMGLKTTGRLCTVAKARGLRACRGELRDTILDWEDALPDRDLALADEASRNADLSITLGTSLQIRPSGNLPLATKRRGGKLVIVNLQPTKHDRHADLRIHGYVDDVMTQLMKHLGLEIPAWDGPRVLEKALPPLPRPPTPKLEPTDKSLAQLNGSVPADSKPEPCTWHNGSQPASPKREQPDSPAPRRPPKRVKAEVTPS.

N-acetylserine is present on serine 2. Serine 10 is subject to Phosphoserine. The Deacetylase sirtuin-type domain occupies 27–272 (PEELERKVWE…TQLMKHLGLE (246 aa)). At lysine 33 the chain carries N6-acetyllysine. Positions 53, 57, 64, 65, 71, 113, and 133 each coordinate NAD(+). Residue histidine 133 is the Proton acceptor of the active site. Zn(2+) is bound by residues cysteine 141, cysteine 144, and cysteine 166. Lysine 170 participates in a covalent cross-link: Glycyl lysine isopeptide (Lys-Gly) (interchain with G-Cter in ubiquitin). Position 177 (cysteine 177) interacts with Zn(2+). NAD(+) is bound by residues glycine 214, serine 216, asparagine 240, glutamine 242, and valine 258. Positions 284–355 (KALPPLPRPP…KRVKAEVTPS (72 aa)) are disordered. Pro residues predominate over residues 287-296 (PPLPRPPTPK). Threonine 294 bears the Phosphothreonine mark. A phosphoserine mark is found at serine 303 and serine 330.

The protein belongs to the sirtuin family. Class IV subfamily. As to quaternary structure, homodimer; binds to nucleosomes and DNA ends as a homodimer. Interacts with RELA; interferes with RELA binding to target DNA. Interacts with SMARCA5; promoting recruitment of SMARCA5/SNF2H to double-strand breaks (DSBs) sites. Interacts with the mTORC2 complex; preventing the ability of SIRT6 to deacetylate FOXO1. Interacts with the CLOCK-BMAL1 complex; recruited by the CLOCK-BMAL1 complex to regulate expression of clock-controlled genes. Interacts with CSNK2A2; preventing CSNK2A2 localization to the nucleus. Post-translationally, acetylated at Lys-33. Deacetylation at Lys-33 by SIRT1 promotes homomultimerization and binding to double-strand breaks (DSBs) sites. Phosphorylation at Ser-10 by MAPK8/JNK1 in response to oxidative stress stimulates the mono-ADP-ribosyltransferase activity on PARP1, leading to PARP1 recruitment to double-strand breaks (DSBs). In terms of processing, monoubiquitinated at Lys-170 by STUB1/CHIP, preventing its degradation by the proteasome. Post-translationally, sumoylated, leading to specifically decrease ability to deacetylate histone H3 at 'Lys-56' (H3K56ac).

Its subcellular location is the nucleus. The protein localises to the chromosome. It is found in the telomere. It localises to the endoplasmic reticulum. It carries out the reaction N(6)-acetyl-L-lysyl-[protein] + NAD(+) + H2O = 2''-O-acetyl-ADP-D-ribose + nicotinamide + L-lysyl-[protein]. The enzyme catalyses N(6)-tetradecanoyl-L-lysyl-[protein] + NAD(+) + H2O = 2''-O-tetradecanoyl-ADP-D-ribose + nicotinamide + L-lysyl-[protein]. It catalyses the reaction N(6)-hexadecanoyl-L-lysyl-[protein] + NAD(+) + H2O = 2''-O-hexadecanoyl-ADP-D-ribose + nicotinamide + L-lysyl-[protein]. The catalysed reaction is L-lysyl-[protein] + NAD(+) = N(6)-(ADP-D-ribosyl)-L-lysyl-[protein] + nicotinamide + H(+). It carries out the reaction L-arginyl-[protein] + NAD(+) = N(omega)-(ADP-D-ribosyl)-L-arginyl-[protein] + nicotinamide + H(+). Compared to the defatty-acylase activity, the protein deacetylase activity is weak in vitro, and requires activation. The histone deacetylase activity is strongly activated upon binding to nucleosomes and chromatin in vivo. Two molecules of SIRT6 associate with the acidic patch of one nucleosome, while the C-terminal disordered region of SIRT6 associates with nucleosomal DNA, leading to efficient histone deacetylation. The protein-lysine deacetylase activity is also activated by long-chain free fatty-acids. NAD-dependent protein deacetylase, deacylase and mono-ADP-ribosyltransferase that plays an essential role in DNA damage repair, telomere maintenance, metabolic homeostasis, inflammation, tumorigenesis and aging. Displays protein-lysine deacetylase or defatty-acylase (demyristoylase and depalmitoylase) activity, depending on the context. Acts as a key histone deacetylase by catalyzing deacetylation of histone H3 at 'Lys-9', 'Lys-18' and 'Lys-56' (H3K9ac, H3K18ac and H3K56ac, respectively), suppressing target gene expression of several transcription factors, including NF-kappa-B. Acts as an inhibitor of transcription elongation by mediating deacetylation of H3K9ac and H3K56ac, preventing release of NELFE from chromatin and causing transcriptional pausing. Involved in DNA repair by promoting double-strand break (DSB) repair: acts as a DSB sensor by recognizing and binding DSB sites, leading to (1) recruitment of DNA repair proteins, such as SMARCA5/SNF2H, and (2) deacetylation of histone H3K9ac and H3K56ac. SIRT6 participation to DSB repair is probably involved in extension of life span. Also promotes DNA repair by deacetylating non-histone proteins, such as DDB2 and p53/TP53. Specifically deacetylates H3K18ac at pericentric heterochromatin, thereby maintaining pericentric heterochromatin silencing at centromeres and protecting against genomic instability and cellular senescence. Involved in telomere maintenance by catalyzing deacetylation of histone H3 in telomeric chromatin, regulating telomere position effect and telomere movement in response to DNA damage. Required for embryonic stem cell differentiation by mediating histone deacetylation of H3K9ac. Plays a major role in metabolism by regulating processes such as glycolysis, gluconeogenesis, insulin secretion and lipid metabolism. Inhibits glycolysis via histone deacetylase activity and by acting as a corepressor of the transcription factor HIF1A, thereby controlling the expression of multiple glycolytic genes. Has tumor suppressor activity by repressing glycolysis, thereby inhibiting the Warburg effect. Also regulates glycolysis and tumorigenesis by mediating deacetylation and nuclear export of non-histone proteins, such as isoform M2 of PKM (PKM2). Acts as a negative regulator of gluconeogenesis by mediating deacetylation of non-histone proteins, such as FOXO1 and KAT2A/GCN5. Promotes beta-oxidation of fatty acids during fasting by catalyzing deacetylation of NCOA2, inducing coactivation of PPARA. Acts as a regulator of lipid catabolism in brown adipocytes, both by catalyzing deacetylation of histones and non-histone proteins, such as FOXO1. Also acts as a regulator of circadian rhythms, both by regulating expression of clock-controlled genes involved in lipid and carbohydrate metabolism, and by catalyzing deacetylation of PER2. The defatty-acylase activity is specifically involved in regulation of protein secretion. Has high activity toward long-chain fatty acyl groups and mediates protein-lysine demyristoylation and depalmitoylation of target proteins, such as RRAS2 and TNF, thereby regulating their secretion. Also acts as a mono-ADP-ribosyltransferase by mediating mono-ADP-ribosylation of PARP1, TRIM28/KAP1 or SMARCC2/BAF170. Mono-ADP-ribosyltransferase activity is involved in DNA repair, cellular senescence, repression of LINE-1 retrotransposon elements and regulation of transcription. The protein is NAD-dependent protein deacylase sirtuin-6 of Castor canadensis (American beaver).